Here is a 214-residue protein sequence, read N- to C-terminus: cAMP-activated global transcriptional regulator Vfr (214 aa).

3',5'-cyclic AMP contacts are provided by residues 59 to 60 (RE), 73 to 75 (GEL), 87 to 88 (RS), 132 to 133 (TT), Arg-179, and Arg-185. In terms of domain architecture, HTH crp-type spans 142-214 (LDVTGRVART…GKTMVVFGTR (73 aa)). A DNA-binding region (H-T-H motif) is located at residues 174–193 (RQEIGRIVGCSREMVGRVLK).

In terms of assembly, homodimer.

In terms of biological role, global cAMP-dependent transcriptional regulator that controls virulence gene expression by distinct cAMP-dependent and -independent mechanisms, which allow to fine tune its virulence program in response to specific host cues or environments. Controls the expression of many regulatory targets including type II, type III and type IV secretion systems, flagellar-mediated motility, and quorum sensing systems. Transcriptional control is exerted by binding to a well-characterized consensus site (5'-ANWWTGNGAWNYAGWTCACAT) within target promoters. Directly binds to the toxA upstream region to regulate exotoxin A production, to the lasR gene promoter to activate the las quorum-sensing system or to the exsA promoter to regulate type III secretion system. Autoregulates as well its own expression. In Pseudomonas aeruginosa (strain ATCC 15692 / DSM 22644 / CIP 104116 / JCM 14847 / LMG 12228 / 1C / PRS 101 / PAO1), this protein is cAMP-activated global transcriptional regulator Vfr (vfr).